Consider the following 135-residue polypeptide: Kappa-casein (135 aa).

O-linked (GalNAc...) threonine glycosylation occurs at threonine 96. A Phosphoserine; alternate modification is found at serine 114. Residue serine 114 is glycosylated (O-linked (GalNAc...) serine; alternate). Residue threonine 131 is glycosylated (O-linked (GalNAc...) threonine). Serine 132 carries the phosphoserine modification.

The protein belongs to the kappa-casein family. In terms of tissue distribution, mammary gland specific. Secreted in milk.

The protein localises to the secreted. Kappa-casein stabilizes micelle formation, preventing casein precipitation in milk. In Equus grevyi (Grevy's zebra), this protein is Kappa-casein (CSN3).